Reading from the N-terminus, the 286-residue chain is Phosphatidylglycerol--prolipoprotein diacylglyceryl transferase (286 aa).

Helical transmembrane passes span 24 to 44 (IGPL…LFAW), 72 to 92 (FIVW…VLFY), 104 to 124 (IFAV…VILA), 140 to 160 (FDVV…ANFI), 190 to 210 (LYEA…LTHS), 218 to 238 (RFVG…VEFF), and 253 to 273 (WLTM…WAMA). Arg155 contributes to the a 1,2-diacyl-sn-glycero-3-phospho-(1'-sn-glycerol) binding site.

The protein belongs to the Lgt family.

It localises to the cell inner membrane. The enzyme catalyses L-cysteinyl-[prolipoprotein] + a 1,2-diacyl-sn-glycero-3-phospho-(1'-sn-glycerol) = an S-1,2-diacyl-sn-glyceryl-L-cysteinyl-[prolipoprotein] + sn-glycerol 1-phosphate + H(+). Its pathway is protein modification; lipoprotein biosynthesis (diacylglyceryl transfer). In terms of biological role, catalyzes the transfer of the diacylglyceryl group from phosphatidylglycerol to the sulfhydryl group of the N-terminal cysteine of a prolipoprotein, the first step in the formation of mature lipoproteins. In Mesorhizobium japonicum (strain LMG 29417 / CECT 9101 / MAFF 303099) (Mesorhizobium loti (strain MAFF 303099)), this protein is Phosphatidylglycerol--prolipoprotein diacylglyceryl transferase.